The primary structure comprises 381 residues: Ceramide-binding protein svf-1 (381 aa).

Residues 1–18 (MFKWAQAALANVAGTKEP) form a peripherally associates with membranes region.

The protein belongs to the SVF1 family.

It is found in the golgi apparatus. It localises to the cis-Golgi network membrane. The protein resides in the endoplasmic reticulum membrane. Its subcellular location is the cytoplasm. The protein localises to the nucleus. In terms of biological role, ceramide-binding protein that may transfer ceramides from the endoplasmic reticulum membrane to the cis-Golgi network membrane, and is thereby required for the biosynthesis of complex sphingolipids. The sequence is that of Ceramide-binding protein svf-1 (svf-1) from Neurospora crassa (strain ATCC 24698 / 74-OR23-1A / CBS 708.71 / DSM 1257 / FGSC 987).